The primary structure comprises 836 residues: Protein-glutamine gamma-glutamyltransferase K (836 aa).

The segment covering 1–33 (MDGPRSDMGRSDVSRSDMSRSDMGRSDMGRSDV) has biased composition (basic and acidic residues). Disordered regions lie at residues 1-68 (MDGP…SRGG) and 89-125 (DDWG…DGTI). Thr-46 bears the Phosphothreonine mark. Phosphoserine is present on residues Ser-48, Ser-98, and Ser-112. Basic and acidic residues predominate over residues 89–112 (DDWGREPSDSRDRGSSSRGGRPDS). Active-site residues include Cys-397, His-456, and Asp-479. Ca(2+) contacts are provided by Asn-519, Asp-521, Glu-568, and Glu-573. Ser-824 carries the post-translational modification Phosphoserine.

This sequence belongs to the transglutaminase superfamily. Transglutaminase family. In terms of assembly, interacts with PLAAT4. It depends on Ca(2+) as a cofactor. Palmitoylated. In terms of processing, the membrane anchorage region possesses a cluster of five cysteines within which fatty acid(s) may become thioester-linked. It is subject to phorbol ester-stimulated phosphorylation and is hypersensitive to proteolysis, which releases the enzyme in a soluble form. Post-translationally, tyrosine-phosphorylated.

The protein resides in the membrane. It catalyses the reaction L-glutaminyl-[protein] + L-lysyl-[protein] = [protein]-L-lysyl-N(6)-5-L-glutamyl-[protein] + NH4(+). With respect to regulation, inhibited by retinoic acid, but phorbol ester treatment activates it. In terms of biological role, catalyzes the cross-linking of proteins and the conjugation of polyamines to proteins. Responsible for cross-linking epidermal proteins during formation of the stratum corneum. Involved in cell proliferation. This chain is Protein-glutamine gamma-glutamyltransferase K (TGM1), found in Oryctolagus cuniculus (Rabbit).